A 339-amino-acid polypeptide reads, in one-letter code: DNA-directed RNA polymerase subunit alpha (339 aa).

Positions 1-233 (MVREEVAGST…DLFLPFLHAE (233 aa)) are alpha N-terminal domain (alpha-NTD). Residues 264–339 (KKGIPLNCIF…IDLLKNKLSF (76 aa)) form an alpha C-terminal domain (alpha-CTD) region.

Belongs to the RNA polymerase alpha chain family. As to quaternary structure, in plastids the minimal PEP RNA polymerase catalytic core is composed of four subunits: alpha, beta, beta', and beta''. When a (nuclear-encoded) sigma factor is associated with the core the holoenzyme is formed, which can initiate transcription.

The protein resides in the plastid. It is found in the chloroplast. It carries out the reaction RNA(n) + a ribonucleoside 5'-triphosphate = RNA(n+1) + diphosphate. Its function is as follows. DNA-dependent RNA polymerase catalyzes the transcription of DNA into RNA using the four ribonucleoside triphosphates as substrates. In Aegilops uniaristata (Goatgrass), this protein is DNA-directed RNA polymerase subunit alpha.